A 1175-amino-acid chain; its full sequence is 1-phosphatidylinositol 4,5-bisphosphate phosphodiesterase beta-4 (1175 aa).

Ala2 is subject to N-acetylalanine. A PI-PLC X-box domain is found at Gln313 to Lys463. Active-site residues include His328 and His375. Residues Ala487–Pro512 are disordered. A compositionally biased stretch (acidic residues) spans Leu493–Glu508. The region spanning Leu565–Arg681 is the PI-PLC Y-box domain. Residues Asp684–Leu809 enclose the C2 domain. 2 disordered regions span residues Ser860–Gly904 and Lys1082–Leu1110. Polar residues-rich tracts occupy residues Val885–Ala900 and Met1085–Asp1094. Thr886 is subject to Phosphothreonine. Positions Lys1095 to Glu1109 are enriched in basic and acidic residues.

It depends on Ca(2+) as a cofactor. Preferentially expressed in the retina.

The protein localises to the cell membrane. It catalyses the reaction a 1,2-diacyl-sn-glycero-3-phospho-(1D-myo-inositol-4,5-bisphosphate) + H2O = 1D-myo-inositol 1,4,5-trisphosphate + a 1,2-diacyl-sn-glycerol + H(+). It carries out the reaction a 1,2-diacyl-sn-glycero-3-phospho-(1D-myo-inositol) + H2O = 1D-myo-inositol 1-phosphate + a 1,2-diacyl-sn-glycerol + H(+). Functionally, activated phosphatidylinositol-specific phospholipase C enzymes catalyze the production of the second messenger molecules diacylglycerol (DAG) and inositol 1,4,5-trisphosphate (IP3) involved in G-protein coupled receptor signaling pathways. PLCB4 is a direct effector of the endothelin receptor signaling pathway that plays an essential role in lower jaw and middle ear structures development. This is 1-phosphatidylinositol 4,5-bisphosphate phosphodiesterase beta-4 from Rattus norvegicus (Rat).